Here is a 298-residue protein sequence, read N- to C-terminus: Probable D,D-dipeptide transport system permease protein DdpC (298 aa).

Residues 1–33 (MMLSEETSAVRPQKQTRFNGAKLVWMLKGSPLT) are Cytoplasmic-facing. A helical membrane pass occupies residues 34–54 (VTSAVIIVLMLLMMIFSPWLA). Residues 55 to 96 (THDPNAIDLTARLLPPSAAHWFGTDEVGRDLFSRVLVGSQQS) are Periplasmic-facing. Residues 97–117 (ILAGLVVVAIAGMIGSLLGCL) form a helical membrane-spanning segment. Residues 97-282 (ILAGLVVVAI…LTAVGFNLFG (186 aa)) enclose the ABC transmembrane type-1 domain. The Cytoplasmic segment spans residues 118–124 (SGVLGGR). Helical transmembrane passes span 125–145 (ADAIIMRIMDIMLSIPSLVLT) and 146–166 (MALAAALGPSLFNAMLAIAIV). Residues 167 to 217 (RIPFYVRLARGQALVVRQYTYVQAAKTFGASRWHLINWHILRNSLPPLIVQ) lie on the Cytoplasmic side of the membrane. Residues 218–238 (ASLDIGSAILMAATLGFIGLG) traverse the membrane as a helical segment. The Periplasmic segment spans residues 239–260 (AQQPSAEWGAMVANGRNYVLDQ). Residues 261 to 281 (WWYCAFPGAAILLTAVGFNLF) traverse the membrane as a helical segment. Residues 282 to 298 (GDGIRDLLDPKAGGKQS) are Cytoplasmic-facing.

Belongs to the binding-protein-dependent transport system permease family. OppBC subfamily. As to quaternary structure, the complex is composed of two ATP-binding proteins (DdpD and DdpF), two transmembrane proteins (DdpB and DdpC) and a solute-binding protein (DdpA).

The protein localises to the cell inner membrane. Functionally, part of the ABC transporter complex DdpABCDF, which is probably involved in D,D-dipeptide transport. Probably responsible for the translocation of the substrate across the membrane. This is Probable D,D-dipeptide transport system permease protein DdpC (ddpC) from Escherichia coli (strain K12).